The primary structure comprises 172 residues: CD164 sialomucin-like 2 protein (172 aa).

The N-terminal stretch at 1–29 (MAAPGPRALRAALCGGCCCLLLCAQLVLA) is a signal peptide. Residues 30 to 137 (GKGARGFGRG…PEDHSPGFDG (108 aa)) are Extracellular-facing. 2 N-linked (GlcNAc...) asparagine glycosylation sites follow: asparagine 69 and asparagine 101. Positions 108–132 (ASHHHSTEEPKPSTTGSPPIPEDHS) are disordered. Residues 138-158 (ASFIGGIVLVLSLQATAFFVL) traverse the membrane as a helical segment. Over 159 to 172 (RFLKAKDSTYQTLI) the chain is Cytoplasmic.

Belongs to the CD164 family.

Its subcellular location is the membrane. The protein is CD164 sialomucin-like 2 protein (Cd164l2) of Mus musculus (Mouse).